Here is a 656-residue protein sequence, read N- to C-terminus: Kinesin-related protein SMY1 (656 aa).

The region spanning 27 to 364 (HIEVILRAIP…LEFGDSIRQI (338 aa)) is the Kinesin motor domain. 114–121 (GPSFSGKS) lines the ATP pocket. At threonine 583 the chain carries Phosphothreonine.

This sequence belongs to the TRAFAC class myosin-kinesin ATPase superfamily. Kinesin family.

It is found in the cytoplasm. The protein localises to the cytoskeleton. Possible microtubule-based motor that can interact or substitute with myosin 2 (MYO2). The sequence is that of Kinesin-related protein SMY1 (SMY1) from Saccharomyces cerevisiae (strain ATCC 204508 / S288c) (Baker's yeast).